Here is a 354-residue protein sequence, read N- to C-terminus: Glycine betaine/proline betaine transport system permease protein ProW (354 aa).

Residues 1-28 (MADQTNPWDTAQVADTTTQTADAWGTPA) form a disordered region. The Cytoplasmic portion of the chain corresponds to 1–99 (MADQTNPWDT…VDYILNGFQQ (99 aa)). A compositionally biased stretch (low complexity) spans 9–23 (DTAQVADTTTQTADA). A helical membrane pass occupies residues 100 to 120 (LLLGMPAPVAIILFALIAWQV). S121 is a topological domain (periplasmic). Residues 122–142 (GVGMGIATLISLIAIGAIGAW) traverse the membrane as a helical segment. At 143–148 (SQAMIT) the chain is on the cytoplasmic side. One can recognise an ABC transmembrane type-1 domain in the interval 145 to 324 (AMITLALVLT…ILAIILDRLT (180 aa)). The chain crosses the membrane as a helical span at residues 149-169 (LALVLTALLFCVVIGLPMGIW). At 170-198 (LARSPRAAKIVRPLLDAMQTTPAFVYLVP) the chain is on the periplasmic side. Residues 199-219 (IVMLFGIGNVPGVVVTIIFAL) form a helical membrane-spanning segment. Residues 220–270 (PPIVRLTILGINQVPADLIEASRSFGASPRQMLFKVQLPLAMPTIMAGVNQ) lie on the Cytoplasmic side of the membrane. A helical transmembrane segment spans residues 271-291 (TLMLALSMVVIASMIAVGGLG). The Periplasmic portion of the chain corresponds to 292–300 (QMVLRGIGR). Residues 301–321 (LDMGLATVGGVGIVILAIILD) form a helical membrane-spanning segment. Residues 322-354 (RLTQAVGRDSRSRGNRRWYTTGPVGLITRPFVK) are Cytoplasmic-facing.

This sequence belongs to the binding-protein-dependent transport system permease family. CysTW subfamily. In terms of assembly, the complex is composed of two ATP-binding proteins (ProV), two transmembrane proteins (ProW) and a solute-binding protein (ProX).

Its subcellular location is the cell inner membrane. Functionally, part of the ProU ABC transporter complex involved in glycine betaine and proline betaine uptake. Probably responsible for the translocation of the substrate across the membrane. The protein is Glycine betaine/proline betaine transport system permease protein ProW of Salmonella typhimurium (strain LT2 / SGSC1412 / ATCC 700720).